The chain runs to 395 residues: MTPYSSFLFFILLGILLLPTIILGLNGKRFQAYNMFISIIILALIFSHDLHGVIALCLFTIWQVLLISGYLAYRQKANSGFVFCGAVIASILPLFLSKIWPFLSHPQPHHPPHNLISFLGISYLTFKGVQLIMEARDGLLKEQLPLHRLLYFILFFPTISSGPIDRYRRFVKDEQKAWTKEEYADLLYTGIHKIFIGFLYKFIIGYAINTYFIMNLPAITHNKILGNLLYMYGYSMYLFFDFAGYTMFAVGVSYIMGIKSPENFNKPFISKNIKDFWNRWHMSLSFWFRDYVFMRFVFWMTKKKWIKNRMAVSNIGYFLLFMLMGVWHGLAPQYIIYGLYHAVLMTCYNFFEKWNKKYKWLPSNRWTTILAIVITFHFVCFGFYIFSGKPFHHHH.

Over Met-1 to Ser-6 the chain is Extracellular. Residues Phe-7–Asn-26 traverse the membrane as a helical segment. At Gly-27–Phe-30 the chain is on the cytoplasmic side. A helical membrane pass occupies residues Gln-31 to Phe-46. Over Ser-47–Leu-50 the chain is Extracellular. Residues His-51–Lys-76 form a helical membrane-spanning segment. At Ala-77–Ser-79 the chain is on the cytoplasmic side. A helical membrane pass occupies residues Gly-80 to Ser-104. At His-105–Gly-120 the chain is on the extracellular side. Residues Ile-121 to Asp-137 traverse the membrane as a helical segment. Residues Gly-138–Pro-145 are Cytoplasmic-facing. An intramembrane segment occupies Leu-146–Gln-175. Over Lys-176–Thr-179 the chain is Cytoplasmic. The chain crosses the membrane as a helical span at residues Lys-180–Lys-223. Position 224 (Ile-224) is a topological domain, extracellular. Residues Leu-225–Met-256 traverse the membrane as a helical segment. Over Gly-257–Lys-266 the chain is Cytoplasmic. Residues Pro-267–Lys-303 lie within the membrane without spanning it. At Lys-304–Asn-308 the chain is on the cytoplasmic side. A helical membrane pass occupies residues Arg-309–His-328. The active site involves His-328. Residues Gly-329–Gln-333 lie on the Extracellular side of the membrane. The helical transmembrane segment at Tyr-334 to Phe-351 threads the bilayer. Residues Glu-352–Asn-364 are Cytoplasmic-facing. A helical transmembrane segment spans residues Arg-365–Ser-387. Residues Gly-388–His-395 are Extracellular-facing.

It belongs to the membrane-bound acyltransferase family.

It is found in the cell membrane. It functions in the pathway cell wall biogenesis; lipoteichoic acid biosynthesis. Functionally, O-acyltransferase that catalyzes D-alanylation of both teichoic acid and lipoteichoic acid (LTA). D-alanylation of LTA plays an important role in modulating the properties of the cell wall in Gram-positive bacteria, influencing the net charge of the cell wall. Catalyzes D-alanylation from DltC carrier protein. This is Teichoic acid D-alanyltransferase from Bacillus subtilis (strain 168).